Reading from the N-terminus, the 369-residue chain is Aminomethyltransferase (369 aa).

The protein belongs to the GcvT family. The glycine cleavage system is composed of four proteins: P, T, L and H.

The catalysed reaction is N(6)-[(R)-S(8)-aminomethyldihydrolipoyl]-L-lysyl-[protein] + (6S)-5,6,7,8-tetrahydrofolate = N(6)-[(R)-dihydrolipoyl]-L-lysyl-[protein] + (6R)-5,10-methylene-5,6,7,8-tetrahydrofolate + NH4(+). Its function is as follows. The glycine cleavage system catalyzes the degradation of glycine. This is Aminomethyltransferase from Xanthomonas axonopodis pv. citri (strain 306).